Consider the following 1112-residue polypeptide: Glutamate receptor-interacting protein 1 (1112 aa).

S43 bears the Phosphoserine mark. PDZ domains are found at residues 53-136 (VVEL…EYEL), 150-238 (TVEV…EYDV), 252-336 (LVEV…LPHH), 471-560 (EVVL…EFDV), 572-657 (HVKL…RKDE), and 672-754 (TVEL…KKQT). 3 disordered regions span residues 752–796 (KQTD…VYPS), 841–886 (KRAS…AEQE), and 922–963 (NHEA…DVGR). A compositionally biased stretch (low complexity) spans 869 to 880 (STASGFAGASDS). Residues 928-958 (ARSQLGRQASFQERSNSRPHYSQTTRSNTLP) are compositionally biased toward polar residues. The PDZ 7 domain maps to 988 to 1070 (KVTLYKDSGM…KLDLVISRNP (83 aa)). The tract at residues 1077–1112 (IEQPALPSDWSEQNSAFFQQPSHGGNLETREPTNTL) is disordered. A compositionally biased stretch (polar residues) spans 1086–1099 (WSEQNSAFFQQPSH).

Interacts with EFNB1, EPHA7, EPHB2, EFNB3, KIF5A, KIF5C, KIF5B and the C-terminal tail of PRLHR. Forms a ternary complex with GRIA2 and CSPG4. Can form homomultimers or heteromultimers with GRIP2. Interacts with GRIA2, GRIA3, GRIPAP1/GRASP1, PPFIA1, PPFIA4, FRAS1, PLCD4, PTPRF and liprins-alpha. Interacts with ATAD1 in an ATP-dependent manner. ATAD1-catalyzed ATP hydrolysis disrupts binding to ATAD1 and to GRIA2 and leads to AMPAR complex disassembly. Interacts with SLC30A9. Interacts with BUD23. Forms a complex with NSG1, GRIA2 and STX12; controls the intracellular fate of AMPAR and the endosomal sorting of the GRIA2 subunit toward recycling and membrane targeting. Interacts with NSG1. In terms of tissue distribution, expressed in brain, testis and retina. In brain highly expressed in the olfactory bulb, cortex and hippocampus and lower level in thalamus, cerebellum and spinal cord. In brain it is found in the perikaryon, dendrites, dendritic shafts, dendritic spines and, excitatory and inhibitory synapses of neurons. In retina, it is most abundant in the plexiform layers than in perikarya.

The protein localises to the cytoplasmic vesicle. The protein resides in the perikaryon. Its subcellular location is the cell projection. It is found in the dendrite. It localises to the cytoplasm. The protein localises to the endomembrane system. The protein resides in the postsynaptic cell membrane. Its subcellular location is the postsynaptic density. It is found in the endoplasmic reticulum membrane. In terms of biological role, may play a role as a localized scaffold for the assembly of a multiprotein signaling complex and as mediator of the trafficking of its binding partners at specific subcellular location in neurons. Through complex formation with NSG1, GRIA2 and STX12 controls the intracellular fate of AMPAR and the endosomal sorting of the GRIA2 subunit toward recycling and membrane targeting. This Rattus norvegicus (Rat) protein is Glutamate receptor-interacting protein 1 (Grip1).